We begin with the raw amino-acid sequence, 255 residues long: Biotin carboxyl carrier protein of acetyl-CoA carboxylase 2, chloroplastic (255 aa).

The N-terminal 87 residues, Met-1–Ser-87, are a transit peptide targeting the chloroplast. The segment at Pro-148 to Pro-193 is disordered. Residues Pro-149 to Thr-162 show a composition bias toward pro residues. The segment covering Ser-163 to Pro-180 has biased composition (low complexity). The Biotinyl-binding domain occupies His-178–Ala-254. Lys-220 bears the N6-biotinyllysine mark.

In terms of assembly, acetyl-CoA carboxylase is a heterohexamer composed of biotin carboxyl carrier protein, biotin carboxylase and 2 subunits each of ACCase subunit alpha and ACCase plastid-coded subunit beta (accD). As to expression, primarily expressed in 7 to 10 days after flowering seeds at levels approximately 2-fold less abundant than BCCP1.

The protein resides in the plastid. The protein localises to the chloroplast. It participates in lipid metabolism; fatty acid biosynthesis. This protein is a component of the acetyl coenzyme A carboxylase complex; first, biotin carboxylase catalyzes the carboxylation of the carrier protein and then the transcarboxylase transfers the carboxyl group to form malonyl-CoA. This is Biotin carboxyl carrier protein of acetyl-CoA carboxylase 2, chloroplastic (BCCP2) from Arabidopsis thaliana (Mouse-ear cress).